Here is a 466-residue protein sequence, read N- to C-terminus: Rhodanese-like domain-containing protein 4, chloroplastic (466 aa).

The transit peptide at Met1–Leu15 directs the protein to the chloroplast. Positions Met1–Lys35 are disordered. The N-terminal 54 residues, Ser16–Ser69, are a transit peptide targeting the thylakoid. Residues Pro103–Leu123 form a helical membrane-spanning segment. In terms of domain architecture, Rhodanese spans Thr144–Glu250. Residues Val277–Ile297 traverse the membrane as a helical segment. The segment covering Glu373–Val384 has biased composition (low complexity). Disordered regions lie at residues Glu373 to Glu392 and Ala426 to Pro466. Over residues Leu455–Pro466 the composition is skewed to pro residues.

In terms of assembly, component of high molecular weight thylakoid LFNRs-containing protein complexes containing LIR1, LFNR1, LFNR2, TIC62 and TROL proteins. As to expression, expressed in leaves and stems, and at lower levels in flowers and siliques (at protein level).

Its subcellular location is the plastid. It is found in the chloroplast envelope. The protein localises to the chloroplast thylakoid membrane. In terms of biological role, rhodanese domain-containing protein required for anchoring ferredoxin--NADP reductase to the thylakoid membranes and sustaining efficient linear electron flow (LEF). The polypeptide is Rhodanese-like domain-containing protein 4, chloroplastic (Arabidopsis thaliana (Mouse-ear cress)).